The following is a 627-amino-acid chain: BURP domain-containing protein 12 (627 aa).

The first 25 residues, 1-25 (MASPPHLPLLLLLLVVVCNAAGGDG), serve as a signal peptide directing secretion. Residues Asn119, Asn175, Asn251, Asn366, Asn384, and Asn530 are each glycosylated (N-linked (GlcNAc...) asparagine). The region spanning 415–626 (FFRETELVSG…FEGDMTWTVA (212 aa)) is the BURP domain.

Expressed in stems, leaves, shoot and panicles.

The protein is BURP domain-containing protein 12 (BURP12) of Oryza sativa subsp. japonica (Rice).